A 552-amino-acid chain; its full sequence is FACT complex subunit POB3 (552 aa).

The segment covering 190–205 (KKEESSNEVVPKKEDG) has biased composition (basic and acidic residues). Disordered regions lie at residues 190–209 (KKEESSNEVVPKKEDGAEGE) and 484–552 (QTAL…PKVE). Residues 490 to 529 (DSDEEDINMGSAGEDDESVDEDFQVSSDNDADEVAEEFDS) show a composition bias toward acidic residues. Over residues 541 to 552 (DEERPSKKPKVE) the composition is skewed to basic and acidic residues.

The protein belongs to the SSRP1 family. As to quaternary structure, forms a stable heterodimer with SPT16. The SPT16-POB3 dimer weakly associates with multiple molecules of NHP6 (NHP6A or NHP6B) to form the FACT (yFACT or SNP) complex. The FACT complex interacts with the CK2 (casein kinase II) complex subunits CKA1, CKA2, CKB1 and CKB2 and the components of the transcription machinery CHD1, CTR9, PAF1 and CDC73. The FACT complex interacts with the PAF1 complex. SPT16 interacts with SAS3 and POL1. Interacts directly with RFA1.

It is found in the nucleus. Its subcellular location is the chromosome. Its function is as follows. Component of the FACT complex, a general chromatin factor that acts to reorganize nucleosomes. The FACT complex is involved in multiple processes that require DNA as a template such as mRNA elongation, DNA replication and DNA repair. During transcription elongation the FACT complex acts as a histone chaperone that both destabilizes and restores nucleosomal structure. It facilitates the passage of RNA polymerase II and transcription by promoting the dissociation of one histone H2A-H2B dimer from the nucleosome, then subsequently promotes the reestablishment of the nucleosome following the passage of RNA polymerase II. Transcription elongation is promoted by the repression of transcription initiation from cryptic sites. Also acts in establishing transcription initiation complexes and promotes SPT15/TBP-binding to a TATA box. Together with replication factor-A protein (RPA), FACT may play a role in nucleosome deposition during DNA replication. The chain is FACT complex subunit POB3 (POB3) from Saccharomyces cerevisiae (strain ATCC 204508 / S288c) (Baker's yeast).